A 546-amino-acid chain; its full sequence is CTP synthase (546 aa).

Positions 1 to 269 (MNPNTKIIFV…DAKLVELLNL (269 aa)) are amidoligase domain. CTP is bound at residue S16. Residue S16 participates in UTP binding. ATP contacts are provided by residues 17 to 22 (SLGKGV) and D74. Mg(2+) is bound by residues D74 and E143. CTP-binding positions include 150 to 152 (DIE), 190 to 195 (KTKPTQ), and K226. UTP-binding positions include 190–195 (KTKPTQ) and K226. In terms of domain architecture, Glutamine amidotransferase type-1 spans 294–546 (TIAMVGKYVS…IHAAVEKSNK (253 aa)). An L-glutamine-binding site is contributed by G356. Residue C383 is the Nucleophile; for glutamine hydrolysis of the active site. Residues 384–387 (LGMQ), E407, and R474 contribute to the L-glutamine site. Active-site residues include H519 and E521.

The protein belongs to the CTP synthase family. As to quaternary structure, homotetramer.

It carries out the reaction UTP + L-glutamine + ATP + H2O = CTP + L-glutamate + ADP + phosphate + 2 H(+). It catalyses the reaction L-glutamine + H2O = L-glutamate + NH4(+). The enzyme catalyses UTP + NH4(+) + ATP = CTP + ADP + phosphate + 2 H(+). The protein operates within pyrimidine metabolism; CTP biosynthesis via de novo pathway; CTP from UDP: step 2/2. Its activity is regulated as follows. Allosterically activated by GTP, when glutamine is the substrate; GTP has no effect on the reaction when ammonia is the substrate. The allosteric effector GTP functions by stabilizing the protein conformation that binds the tetrahedral intermediate(s) formed during glutamine hydrolysis. Inhibited by the product CTP, via allosteric rather than competitive inhibition. Its function is as follows. Catalyzes the ATP-dependent amination of UTP to CTP with either L-glutamine or ammonia as the source of nitrogen. Regulates intracellular CTP levels through interactions with the four ribonucleotide triphosphates. In Francisella philomiragia subsp. philomiragia (strain ATCC 25017 / CCUG 19701 / FSC 153 / O#319-036), this protein is CTP synthase.